The following is a 207-amino-acid chain: Elongation factor 1-beta (207 aa).

Alanine 2 bears the N-acetylalanine mark. Residues phenylalanine 70–glutamate 96 form a disordered region. The segment covering glutamate 80–glutamate 96 has biased composition (acidic residues). Serine 90 carries the phosphoserine; by CK2 modification.

The protein belongs to the EF-1-beta/EF-1-delta family. As to quaternary structure, EF-1 is composed of 4 subunits: alpha, beta, delta, and gamma. Phosphorylation affects the GDP/GTP exchange rate.

Its function is as follows. EF-1-beta and EF-1-delta stimulate the exchange of GDP bound to EF-1-alpha to GTP. The polypeptide is Elongation factor 1-beta (Artemia salina (Brine shrimp)).